A 181-amino-acid polypeptide reads, in one-letter code: Adenine phosphoribosyltransferase (181 aa).

The protein belongs to the purine/pyrimidine phosphoribosyltransferase family. In terms of assembly, homodimer.

Its subcellular location is the cytoplasm. It catalyses the reaction AMP + diphosphate = 5-phospho-alpha-D-ribose 1-diphosphate + adenine. It functions in the pathway purine metabolism; AMP biosynthesis via salvage pathway; AMP from adenine: step 1/1. Functionally, catalyzes a salvage reaction resulting in the formation of AMP, that is energically less costly than de novo synthesis. This Methylorubrum populi (strain ATCC BAA-705 / NCIMB 13946 / BJ001) (Methylobacterium populi) protein is Adenine phosphoribosyltransferase.